The primary structure comprises 119 residues: Large ribosomal subunit protein uL22 (119 aa).

The protein belongs to the universal ribosomal protein uL22 family. Part of the 50S ribosomal subunit.

Functionally, this protein binds specifically to 23S rRNA; its binding is stimulated by other ribosomal proteins, e.g. L4, L17, and L20. It is important during the early stages of 50S assembly. It makes multiple contacts with different domains of the 23S rRNA in the assembled 50S subunit and ribosome. In terms of biological role, the globular domain of the protein is located near the polypeptide exit tunnel on the outside of the subunit, while an extended beta-hairpin is found that lines the wall of the exit tunnel in the center of the 70S ribosome. The chain is Large ribosomal subunit protein uL22 from Chlorobaculum tepidum (strain ATCC 49652 / DSM 12025 / NBRC 103806 / TLS) (Chlorobium tepidum).